Here is a 660-residue protein sequence, read N- to C-terminus: FAST kinase domain-containing protein 3, mitochondrial (660 aa).

Residues 1-57 (MALVTLRRNLYHLSDFRIHGALAALKTQQVNHVHKTVKEHLCPWFWSQHPGPIRVRF) constitute a mitochondrion transit peptide. The RAP domain occupies 591–649 (VALCIDGPKRFCLNSKHLLGKEATKQRHLRLLGYQVVQIPYYEIEMLKSRLELVDYLQG).

Belongs to the FAST kinase family.

Its subcellular location is the mitochondrion. In terms of biological role, required for normal mitochondrial respiration. Increases steady-state levels and half-lives of a subset of mature mitochondrial mRNAs MT-ND2, MT-ND3, MT-CYTB, MT-CO2, and MT-ATP8/6. Promotes MT-CO1 mRNA translation and increases mitochondrial complex IV assembly and activity. The chain is FAST kinase domain-containing protein 3, mitochondrial (FASTKD3) from Bos taurus (Bovine).